The following is a 58-amino-acid chain: Curromycin resistance protein (58 aa).

The segment at 1–37 (MSVVALGATSITPPHGPESQGRPFPARGPVRPSARAR) is disordered. The segment covering 25–37 (PARGPVRPSARAR) has biased composition (low complexity).

This is Curromycin resistance protein (cre) from Streptomyces hygroscopicus.